The primary structure comprises 1533 residues: DNA topoisomerase 2-alpha (1533 aa).

The residue at position 1 (M1) is an N-acetylmethionine. The segment at 1 to 22 (MEVSPLQPVNENMQVNKTKKNE) is disordered. S4 carries the phosphoserine modification. Polar residues predominate over residues 7–16 (QPVNENMQVN). K17 is covalently cross-linked (Glycyl lysine isopeptide (Lys-Gly) (interchain with G-Cter in SUMO2)). ATP is bound by residues N91, N120, and 148–150 (SSN). Glycyl lysine isopeptide (Lys-Gly) (interchain with G-Cter in SUMO2) cross-links involve residues K156 and K157. 161-168 (GRNGYGAK) is an ATP binding site. Residue K261 forms a Glycyl lysine isopeptide (Lys-Gly) (interchain with G-Cter in SUMO2) linkage. Phosphothreonine is present on T282. The segment at 342–344 (KKK) is interaction with DNA. K352 is covalently cross-linked (Glycyl lysine isopeptide (Lys-Gly) (interchain with G-Cter in SUMO2)). Residue 376 to 378 (QTK) coordinates ATP. Glycyl lysine isopeptide (Lys-Gly) (interchain with G-Cter in SUMO2) cross-links involve residues K386, K397, K416, K418, K425, and K440. In terms of domain architecture, Toprim spans 455-572 (CTLILTEGDS…SLLRHRFLEE (118 aa)). E461 contacts Mg(2+). Residues K466, K480, and K529 each participate in a glycyl lysine isopeptide (Lys-Gly) (interchain with G-Cter in SUMO2) cross-link. Mg(2+) contacts are provided by D541 and D543. Residues K584, K599, K614, K622, K625, K632, K639, K655, K662, and K676 each participate in a glycyl lysine isopeptide (Lys-Gly) (interchain with G-Cter in SUMO2) cross-link. Residues 715–1171 (IPSMVDGLKP…SPSDLWKEDL (457 aa)) form the Topo IIA-type catalytic domain. The active-site O-(5'-phospho-DNA)-tyrosine intermediate is Y805. The interaction with DNA stretch occupies residues 990 to 999 (KLQTSLTCNS). Residue K1075 forms a Glycyl lysine isopeptide (Lys-Gly) (interchain with G-Cter in SUMO2) linkage. 2 disordered regions span residues 1090 to 1121 (WKEA…VADS) and 1183 to 1215 (AKEK…PSPC). Acidic residues predominate over residues 1099-1108 (DEEENEESDN). S1106 is modified (phosphoserine; by CK1). Residues K1114, K1196, and K1204 each participate in a glycyl lysine isopeptide (Lys-Gly) (interchain with G-Cter in SUMO2) cross-link. T1205 is subject to Phosphothreonine. The residue at position 1213 (S1213) is a Phosphoserine. Residue K1228 forms a Glycyl lysine isopeptide (Lys-Gly) (interchain with G-Cter in SUMO2) linkage. A disordered region spans residues 1231 to 1533 (AEKKIKKKIK…LEESDEDDLF (303 aa)). K1240 is covalently cross-linked (Glycyl lysine isopeptide (Lys-Gly) (interchain with G-Cter in SUMO1); alternate). K1240 is covalently cross-linked (Glycyl lysine isopeptide (Lys-Gly) (interchain with G-Cter in SUMO2); alternate). T1244 carries the post-translational modification Phosphothreonine. S1247 is modified (phosphoserine). The span at 1256 to 1272 (EGLKQRLEKKQKREPGT) shows a compositional bias: basic and acidic residues. Glycyl lysine isopeptide (Lys-Gly) (interchain with G-Cter in SUMO2) cross-links involve residues K1259, K1276, K1283, and K1286. S1295, S1297, S1299, and S1302 each carry phosphoserine. The residue at position 1327 (T1327) is a Phosphothreonine. Phosphoserine occurs at positions 1332 and 1337. Position 1343 is a phosphothreonine (T1343). Phosphoserine is present on residues S1351 and S1354. Basic and acidic residues predominate over residues 1360–1371 (TSPKHTNKEPKP). Residues K1363, K1367, and K1373 each participate in a glycyl lysine isopeptide (Lys-Gly) (interchain with G-Cter in SUMO2) cross-link. Phosphoserine occurs at positions 1374 and 1377. K1387 is covalently cross-linked (Glycyl lysine isopeptide (Lys-Gly) (interchain with G-Cter in SUMO2)). A phosphoserine mark is found at S1393 and S1395. A compositionally biased stretch (low complexity) spans 1409 to 1433 (KPVSKKNVTVKKTAAKSQSSTSTTG). A Glycyl lysine isopeptide (Lys-Gly) (interchain with G-Cter in SUMO2); alternate cross-link involves residue K1424. Position 1424 is an N6-acetyllysine; alternate (K1424). The interval 1435 to 1441 (KKRAAPK) is interaction with PLSCR1. Over residues 1443–1455 (AKKDPDLDSDVSK) the composition is skewed to basic and acidic residues. Residue K1444 forms a Glycyl lysine isopeptide (Lys-Gly) (interchain with G-Cter in SUMO2); alternate linkage. The residue at position 1444 (K1444) is an N6-acetyllysine; alternate. S1451 is subject to Phosphoserine. Residues K1456 and K1461 each participate in a glycyl lysine isopeptide (Lys-Gly) (interchain with G-Cter in SUMO2) cross-link. Position 1471 is a phosphoserine (S1471). At T1472 the chain carries Phosphothreonine. S1473, S1476, and S1478 each carry phosphoserine. Glycyl lysine isopeptide (Lys-Gly) (interchain with G-Cter in SUMO2) cross-links involve residues K1486 and K1494. Residues 1493–1504 (PKGESDDFHLDL) are compositionally biased toward basic and acidic residues. A phosphoserine mark is found at S1497 and S1527.

The protein belongs to the type II topoisomerase family. As to quaternary structure, homodimer. Interacts with COPS5. Interacts with RECQL5; this stimulates DNA decatenation. Interacts with SETMAR; stimulates the topoisomerase activity. Interacts with DHX9; this interaction occurs in a E2 enzyme UBE2I- and RNA-dependent manner, negatively regulates DHX9-mediated double-stranded DNA and RNA duplex helicase activity and stimulates TOP2A-mediated supercoiled DNA relaxation activity. Interacts with HNRNPU (via C-terminus); this interaction protects the topoisomerase TOP2A from degradation and positively regulates the relaxation of supercoiled DNA in a RNA-dependent manner. Interacts with MCM3AP. Interacts with ERCC6. Interacts with PLSCR1. Interacts with GCNA; this interaction allows the resolution of topoisomerase II (TOP2A) DNA-protein cross-links. Interacts with POL1RA/RPA1 (via dock II) and UBTF in the context of Pol I complex; may assist Pol I transcription initiation by releasing supercoils occurring during DNA unwinding. Interacts with TPRN; TPRN interacts with a number of DNA damage response proteins, is recruited to sites of DNA damage and may play a role in DNA damage repair. Mg(2+) is required as a cofactor. The cofactor is Mn(2+). It depends on Ca(2+) as a cofactor. Phosphorylation has no effect on catalytic activity. However, phosphorylation at Ser-1106 by CSNK1D/CK1 promotes DNA cleavable complex formation.

It localises to the cytoplasm. The protein localises to the nucleus. Its subcellular location is the nucleoplasm. It is found in the nucleolus. It carries out the reaction ATP-dependent breakage, passage and rejoining of double-stranded DNA.. Its function is as follows. Key decatenating enzyme that alters DNA topology by binding to two double-stranded DNA molecules, generating a double-stranded break in one of the strands, passing the intact strand through the broken strand, and religating the broken strand. May play a role in regulating the period length of BMAL1 transcriptional oscillation. The polypeptide is DNA topoisomerase 2-alpha (TOP2A) (Sus scrofa (Pig)).